Consider the following 246-residue polypeptide: Probable transcriptional regulatory protein CLB_3102 (246 aa).

Belongs to the TACO1 family.

It localises to the cytoplasm. The polypeptide is Probable transcriptional regulatory protein CLB_3102 (Clostridium botulinum (strain ATCC 19397 / Type A)).